A 73-amino-acid chain; its full sequence is Toxin Td7 (73 aa).

Residues 1–7 form the signal peptide; sequence IGMAVEC. The LCN-type CS-alpha/beta domain maps to 8–70; sequence KDGYLVGADG…VWDSATNRCG (63 aa). Cystine bridges form between Cys18-Cys69, Cys22-Cys44, Cys30-Cys50, and Cys34-Cys52. Lys71 is subject to Lysine amide.

It belongs to the long (4 C-C) scorpion toxin superfamily. Sodium channel inhibitor family. Beta subfamily. As to expression, expressed by the venom gland.

Its subcellular location is the secreted. Beta toxins bind voltage-independently at site-4 of sodium channels (Nav) and shift the voltage of activation toward more negative potentials thereby affecting sodium channel activation and promoting spontaneous and repetitive firing. In Tityus discrepans (Venezuelan scorpion), this protein is Toxin Td7.